Reading from the N-terminus, the 270-residue chain is Decarboxylase NovR (270 aa).

The protein belongs to the aldolase class II family.

It functions in the pathway antibiotic biosynthesis; novobiocin biosynthesis. Functionally, may mediate the 2 consecutive oxidative decarboxylation steps in the biosynthesis of the prenylated hydroxybenzoic acid moiety of novobiocin, an aminocoumarin family antibiotic that targets bacterial DNA gyrases. This is Decarboxylase NovR (novR) from Streptomyces niveus (Streptomyces spheroides).